Here is a 401-residue protein sequence, read N- to C-terminus: MARNIVVEEIVRTPVEKQKVELVERKGIGHPDSIADGIAESISRALSREYMKRYGVILHHNTDQVEVVGGRAYPRFGGGEVVKPIYILLSGRAVELVDQELFPVHEVAIKAAKEYLKKNIRHLDVENHVVIDSRIGQGSVDLVSVFNKAKENPIPLANDTSFGVGFAPLTETERLVYETERLLNGEKFKKELPAVGEDIKVMGLRRGDEIDLTIAAAIVDSEVSGPKEYLEVKEKIAEAVEELAKDITSRKVNIYVNTADDPDSGIFYITVTGTSAEAGDDGSVGRGNRVNGLITPNRHMSMEAAAGKNPVSHVGKIYNILAMFIANDIAKTLPVEEVYVRILSQIGKPIDQPLVASIQVIPKQGHSVKEFEKDAYSIADEWLANITKIQKMILEDKISVF.

Residue 136 to 141 (GQGSVD) participates in ATP binding.

This sequence belongs to the AdoMet synthase 2 family. Mg(2+) is required as a cofactor.

It carries out the reaction L-methionine + ATP + H2O = S-adenosyl-L-methionine + phosphate + diphosphate. Its pathway is amino-acid biosynthesis; S-adenosyl-L-methionine biosynthesis; S-adenosyl-L-methionine from L-methionine: step 1/1. Its function is as follows. Catalyzes the formation of S-adenosylmethionine from methionine and ATP. This is S-adenosylmethionine synthase (mat) from Pyrococcus abyssi (strain GE5 / Orsay).